A 130-amino-acid chain; its full sequence is Large ribosomal subunit protein bL17 (130 aa).

Belongs to the bacterial ribosomal protein bL17 family. As to quaternary structure, part of the 50S ribosomal subunit. Contacts protein L32.

The polypeptide is Large ribosomal subunit protein bL17 (Pectobacterium atrosepticum (strain SCRI 1043 / ATCC BAA-672) (Erwinia carotovora subsp. atroseptica)).